Reading from the N-terminus, the 121-residue chain is uncharacterized protein (121 aa).

3 helical membrane passes run 12 to 32 (MIGIAALAVGIVLGLVFHPGV), 35 to 55 (VIQPYLPIAVVAALDAVFGGL), and 67 to 87 (VFVVSFVFNVLVAALIVYVGD).

The protein belongs to the sbp family.

The protein localises to the cell membrane. This is an uncharacterized protein from Mycobacterium bovis (strain ATCC BAA-935 / AF2122/97).